The chain runs to 253 residues: Small ribosomal subunit protein eS4 (253 aa).

The 72-residue stretch at 43–114 (LPLLLIVRNV…YPVKFFKLHP (72 aa)) folds into the S4 RNA-binding domain.

This sequence belongs to the eukaryotic ribosomal protein eS4 family.

The chain is Small ribosomal subunit protein eS4 (rps4e) from Aeropyrum pernix (strain ATCC 700893 / DSM 11879 / JCM 9820 / NBRC 100138 / K1).